Reading from the N-terminus, the 89-residue chain is MAKKSVIARNEKRIKLVAKYAELRAELVKAGDYEALRKLPRDSSATRVRNRCVLTGRGRGVYAKFGLCRHMFRKLSLEGKLPGIRKASW.

The protein belongs to the universal ribosomal protein uS14 family. As to quaternary structure, part of the 30S ribosomal subunit. Contacts proteins S3 and S10.

Its function is as follows. Binds 16S rRNA, required for the assembly of 30S particles and may also be responsible for determining the conformation of the 16S rRNA at the A site. In Chlorobium chlorochromatii (strain CaD3), this protein is Small ribosomal subunit protein uS14.